Reading from the N-terminus, the 289-residue chain is 4-hydroxybenzoate octaprenyltransferase (289 aa).

Transmembrane regions (helical) follow at residues 22–42 (AGWL…SHGF), 45–65 (WHLV…GCCI), 96–116 (LGLG…TNAV), 118–138 (IAWS…KRYV), 140–160 (MPQA…FAAV), 164–184 (VPPL…AYDT), 211–231 (VAGV…ALIQ), 236–256 (AIFM…GWLI), and 267–287 (AFRL…LSYW).

It belongs to the UbiA prenyltransferase family. The cofactor is Mg(2+).

The protein localises to the cell inner membrane. The enzyme catalyses all-trans-octaprenyl diphosphate + 4-hydroxybenzoate = 4-hydroxy-3-(all-trans-octaprenyl)benzoate + diphosphate. Its pathway is cofactor biosynthesis; ubiquinone biosynthesis. Its function is as follows. Catalyzes the prenylation of para-hydroxybenzoate (PHB) with an all-trans polyprenyl group. Mediates the second step in the final reaction sequence of ubiquinone-8 (UQ-8) biosynthesis, which is the condensation of the polyisoprenoid side chain with PHB, generating the first membrane-bound Q intermediate 3-octaprenyl-4-hydroxybenzoate. This Polaromonas naphthalenivorans (strain CJ2) protein is 4-hydroxybenzoate octaprenyltransferase.